The following is a 471-amino-acid chain: MAGSPSRAAGRRLQLPLLSFLQGATAVLFAVFVRYNHKTDAALWHRGNHSNADNEFYFRYPSFQDVHAMVFVGFGFLMVFLQRYGFSSVGFTFLLAAFALQWSTLVQGFLHSFHGGHIHVGVESMINADFCAGAVLISFGAVLGKTGPAQLLLMALLEVVLFGINEFVLLHLLGVRDAGGSMTIHTFGAYFGLVLSQVLYRPQLEKSKHRQGLYHSDLFAMIGTIFLWIFWPSFNAALTSLGAGQHRTALNTYYSLAASTLGTFALSALVGEDGRLDMVHIQNAALAGRVVVGTSSEMMLTPFGALAAGFLAGTVSTLGYKFFTPILESKFKVQDTCGVHNLHGMPGVLGVLLGVLVAGLATHEAYGDGLESVFPLIAEGQRSATSQAMYQLFGLFVTLMFASVGGGLGGLLLKLPFLDSPPDSQCYEDQVHWQAPGATLSPLPTPAFQVPGEHEDKAQRPLRVEEADTQA.

Residues 1 to 13 (MAGSPSRAAGRRL) lie on the Cytoplasmic side of the membrane. A helical membrane pass occupies residues 14-33 (QLPLLSFLQGATAVLFAVFV). The Extracellular segment spans residues 34 to 60 (RYNHKTDAALWHRGNHSNADNEFYFRY). A glycan (N-linked (GlcNAc...) asparagine) is linked at Asn-48. The chain crosses the membrane as a helical span at residues 61-81 (PSFQDVHAMVFVGFGFLMVFL). Residues 82-85 (QRYG) are Cytoplasmic-facing. Residues 86–106 (FSSVGFTFLLAAFALQWSTLV) traverse the membrane as a helical segment. The Extracellular segment spans residues 107–123 (QGFLHSFHGGHIHVGVE). A helical transmembrane segment spans residues 124-144 (SMINADFCAGAVLISFGAVLG). Residues 145-148 (KTGP) are Cytoplasmic-facing. Residues 149-169 (AQLLLMALLEVVLFGINEFVL) form a helical membrane-spanning segment. Topologically, residues 170 to 177 (LHLLGVRD) are extracellular. The helical transmembrane segment at 178–200 (AGGSMTIHTFGAYFGLVLSQVLY) threads the bilayer. Over 201–217 (RPQLEKSKHRQGLYHSD) the chain is Cytoplasmic. A helical transmembrane segment spans residues 218–238 (LFAMIGTIFLWIFWPSFNAAL). Topologically, residues 239–249 (TSLGAGQHRTA) are extracellular. A helical membrane pass occupies residues 250-270 (LNTYYSLAASTLGTFALSALV). The Cytoplasmic portion of the chain corresponds to 271–280 (GEDGRLDMVH). Residues 281 to 301 (IQNAALAGRVVVGTSSEMMLT) form a helical membrane-spanning segment. Position 302 (Pro-302) is a topological domain, extracellular. The chain crosses the membrane as a helical span at residues 303–323 (FGALAAGFLAGTVSTLGYKFF). The Cytoplasmic segment spans residues 324–344 (TPILESKFKVQDTCGVHNLHG). A helical transmembrane segment spans residues 345-365 (MPGVLGVLLGVLVAGLATHEA). At 366–391 (YGDGLESVFPLIAEGQRSATSQAMYQ) the chain is on the extracellular side. The helical transmembrane segment at 392 to 412 (LFGLFVTLMFASVGGGLGGLL) threads the bilayer. The Cytoplasmic segment spans residues 413–471 (LKLPFLDSPPDSQCYEDQVHWQAPGATLSPLPTPAFQVPGEHEDKAQRPLRVEEADTQA). The segment at 414-422 (KLPFLDSPP) is interaction with ANK3. A Basolateral sorting signal motif is present at residues 427-430 (YEDQ). A disordered region spans residues 437-471 (GATLSPLPTPAFQVPGEHEDKAQRPLRVEEADTQA). Residues 452–471 (GEHEDKAQRPLRVEEADTQA) show a composition bias toward basic and acidic residues.

It belongs to the ammonium transporter (TC 2.A.49) family. Rh subfamily. In terms of assembly, interacts (via C-terminus) with ANK2 and ANK3; required for targeting to the basolateral membrane. N-glycosylated.

It is found in the cell membrane. It localises to the basolateral cell membrane. The catalysed reaction is NH4(+)(in) = NH4(+)(out). It carries out the reaction methylamine(out) = methylamine(in). The enzyme catalyses CO2(out) = CO2(in). Functionally, ammonium transporter involved in the maintenance of acid-base homeostasis. Transports ammonium and its related derivative methylammonium across the basolateral plasma membrane of epithelial cells likely contributing to renal transepithelial ammonia transport and ammonia metabolism. May transport either NH4(+) or NH3 ammonia species predominantly mediating an electrogenic NH4(+) transport. May act as a CO2 channel providing for renal acid secretion. The polypeptide is Ammonium transporter Rh type B (RHBG) (Pongo pygmaeus (Bornean orangutan)).